A 33-amino-acid polypeptide reads, in one-letter code: MIDYVGSFLGAYFLGFALFYGIGFFKSISNRII.

The helical transmembrane segment at 5–25 threads the bilayer; the sequence is VGSFLGAYFLGFALFYGIGFF.

Belongs to the inovirus G9P protein family.

Its subcellular location is the virion. The protein localises to the host membrane. Its function is as follows. May initiate with G7P the virion concomitant assembly-budding process, by interacting with the packaging signal of the viral genome. The assembly-budding takes place at the host inner membrane. In turn, G7P and G9P are present at the end of the filamentous virion that emerges first from the bacterial host. This chain is Tail virion protein G9P (IX), found in Salmonella phage IKe (Bacteriophage IKe).